We begin with the raw amino-acid sequence, 2471 residues long: Probable polyketide synthase 24 (2471 aa).

Residues 21 to 449 (ENLVAIVGVG…GSNCCLVLSQ (429 aa)) form the Ketosynthase family 3 (KS3) domain. Residues Cys190, His332, and His372 each act as for beta-ketoacyl synthase activity in the active site. Residues 654–687 (GIKASFMLGHSLGEVTTAYCSGMIDIDQLCYLIY) form an acyl/malonyl transferase region. Residue Ser664 is the For acyl/malonyl transferase activity of the active site. The segment at 953–1075 (ISILGNSMQD…SNFHLNSNDN (123 aa)) is N-terminal hotdog fold. A PKS/mFAS DH domain is found at 953–1245 (ISILGNSMQD…VKSLTPVKDP (293 aa)). Residue His987 is the Proton acceptor; for dehydratase activity of the active site. Residues 1094 to 1245 (NLSSIPWDEF…VKSLTPVKDP (152 aa)) form a C-terminal hotdog fold region. The Proton donor; for dehydratase activity role is filled by Asp1157. Positions 1426–1469 (IINEQQQQQQQQQQQQQQQQQQQQQLLNNENNKESLKNLLVNCN) form a coiled coil. The Carrier domain occupies 2336–2413 (SSSTNVKNKF…MVYQIINDSL (78 aa)). O-(pantetheine 4'-phosphoryl)serine is present on Ser2373.

Pantetheine 4'-phosphate serves as cofactor.

Functionally, probable polyketide synthase. The sequence is that of Probable polyketide synthase 24 (pks24) from Dictyostelium discoideum (Social amoeba).